Consider the following 302-residue polypeptide: Putative beta-glucosidase 17 (302 aa).

The signal sequence occupies residues 1–27 (MMAVAAATRIAVVVVAALAALAPGARG). Residues Gln47, His149, and 194-195 (NE) contribute to the a beta-D-glucoside site. Residue Glu195 is the Proton donor of the active site. Residues Cys214 and Cys221 are joined by a disulfide bond. N-linked (GlcNAc...) asparagine glycosylation is present at Asn274.

It belongs to the glycosyl hydrolase 1 family.

It catalyses the reaction Hydrolysis of terminal, non-reducing beta-D-glucosyl residues with release of beta-D-glucose.. The chain is Putative beta-glucosidase 17 (BGLU17) from Oryza sativa subsp. japonica (Rice).